A 263-amino-acid polypeptide reads, in one-letter code: Aminoglycoside 3'-phosphotransferase (263 aa).

Asp-183 functions as the Proton acceptor in the catalytic mechanism.

The protein belongs to the aminoglycoside phosphotransferase family.

It carries out the reaction kanamycin A + ATP = kanamycin 3'-phosphate + ADP + H(+). In terms of biological role, resistance to kanamycin and structurally-related aminoglycosides, including amikacin. The polypeptide is Aminoglycoside 3'-phosphotransferase (rph) (Streptomyces ribosidificus).